The following is a 165-amino-acid chain: Small histone ubiquitination factor 1 (165 aa).

A compositionally biased stretch (basic and acidic residues) spans 1–17 (MSSRRNDYHYDGNDHQY). The segment at 1 to 86 (MSSRRNDYHY…STRASFGAAS (86 aa)) is disordered. Low complexity-rich tracts occupy residues 29 to 38 (SFYESSYRSR) and 50 to 60 (SSYDSPSSSTN). Residues 73–86 (PSNNSTRASFGAAS) are compositionally biased toward polar residues.

Component of the histone H2B ubiquitin ligase complex (HULC) composed of at least brl1, brl2, rhp6 and shf1.

It localises to the nucleus. Its subcellular location is the cytoplasm. The protein localises to the cytoskeleton. The protein resides in the microtubule organizing center. It is found in the spindle pole body. Its function is as follows. Component of the histone H2B ubiquitin ligase complex (HULC) which plays a role in transcription regulation by catalyzing the monoubiquitination of histone H2B to form H2BK123ub1. H2BK123ub1 gives a specific tag for epigenetic transcriptional activation and is also a prerequisite for H3K4me and H3K79me formation. The protein is Small histone ubiquitination factor 1 (shf1) of Schizosaccharomyces pombe (strain 972 / ATCC 24843) (Fission yeast).